The chain runs to 202 residues: Nucleoid occlusion factor SlmA (202 aa).

The 62-residue stretch at 14 to 75 (KERQQQVLEV…ALIERIEQTL (62 aa)) folds into the HTH tetR-type domain. A DNA-binding region (H-T-H motif) is located at residues 38–57 (TTERLAKAVGVSEGALYRYF).

This sequence belongs to the nucleoid occlusion factor SlmA family. As to quaternary structure, homodimer. Interacts with FtsZ.

Its subcellular location is the cytoplasm. The protein resides in the nucleoid. Functionally, required for nucleoid occlusion (NO) phenomenon, which prevents Z-ring formation and cell division over the nucleoid. Acts as a DNA-associated cell division inhibitor that binds simultaneously chromosomal DNA and FtsZ, and disrupts the assembly of FtsZ polymers. SlmA-DNA-binding sequences (SBS) are dispersed on non-Ter regions of the chromosome, preventing FtsZ polymerization at these regions. The polypeptide is Nucleoid occlusion factor SlmA (Haemophilus ducreyi (strain 35000HP / ATCC 700724)).